A 469-amino-acid polypeptide reads, in one-letter code: Glutamate--tRNA ligase (469 aa).

The 'HIGH' region signature appears at Pro-12–Asn-22. The short motif at Lys-244–Arg-248 is the 'KMSKS' region element. Position 247 (Lys-247) interacts with ATP.

The protein belongs to the class-I aminoacyl-tRNA synthetase family. Glutamate--tRNA ligase type 1 subfamily. As to quaternary structure, monomer.

It is found in the cytoplasm. The catalysed reaction is tRNA(Glu) + L-glutamate + ATP = L-glutamyl-tRNA(Glu) + AMP + diphosphate. In terms of biological role, catalyzes the attachment of glutamate to tRNA(Glu) in a two-step reaction: glutamate is first activated by ATP to form Glu-AMP and then transferred to the acceptor end of tRNA(Glu). The chain is Glutamate--tRNA ligase from Acidovorax sp. (strain JS42).